The primary structure comprises 152 residues: UPF0178 protein SAB0630c (152 aa).

It belongs to the UPF0178 family.

The polypeptide is UPF0178 protein SAB0630c (Staphylococcus aureus (strain bovine RF122 / ET3-1)).